Consider the following 402-residue polypeptide: Speedy protein E6 (402 aa).

A disordered region spans residues 1-89 (MDRTETRFRK…EEPEKELAPE (89 aa)). Polar residues predominate over residues 16 to 39 (GKITTSRQPHPQNEQSPQRSTSGY). Residues 76–89 (DESEEEPEKELAPE) are compositionally biased toward acidic residues.

The protein belongs to the Speedy/Ringo family.

The polypeptide is Speedy protein E6 (SPDYE6) (Homo sapiens (Human)).